The chain runs to 120 residues: UPF0102 protein Pfl01_4685 (120 aa).

Belongs to the UPF0102 family.

The chain is UPF0102 protein Pfl01_4685 from Pseudomonas fluorescens (strain Pf0-1).